The sequence spans 205 residues: Glycerol-3-phosphate acyltransferase (205 aa).

The next 5 membrane-spanning stretches (helical) occupy residues 3–23, 53–73, 80–100, 112–132, and 138–158; these read VFALGMILFAYLCGSLSSAIL, GVAATVLVFDVLKGMLPVWLA, PFYLGLTAIAACLGHIYPVFF, LGAIAPIGWDLTGLMTGTWLL, and GYSSLGAIVSALIAPFYVWWF.

Belongs to the PlsY family. Probably interacts with PlsX.

It localises to the cell inner membrane. It catalyses the reaction an acyl phosphate + sn-glycerol 3-phosphate = a 1-acyl-sn-glycero-3-phosphate + phosphate. Its pathway is lipid metabolism; phospholipid metabolism. Catalyzes the transfer of an acyl group from acyl-phosphate (acyl-PO(4)) to glycerol-3-phosphate (G3P) to form lysophosphatidic acid (LPA). This enzyme utilizes acyl-phosphate as fatty acyl donor, but not acyl-CoA or acyl-ACP. This is Glycerol-3-phosphate acyltransferase from Erwinia tasmaniensis (strain DSM 17950 / CFBP 7177 / CIP 109463 / NCPPB 4357 / Et1/99).